Reading from the N-terminus, the 49-residue chain is U1-theraphotoxin-Lp1b (49 aa).

4 disulfides stabilise this stretch: C4–C17, C8–C41, C22–C24, and C35–C46.

Expressed by the venom gland.

The protein resides in the secreted. Toxin that causes irreversible contractile paralysis into adult Aedes aegypti resulting in 100% mortality after 24 hours. In Lasiodora parahybana (Brazilian salmon pink birdeater), this protein is U1-theraphotoxin-Lp1b.